The primary structure comprises 344 residues: Biotin synthase (344 aa).

Residues 36–260 (NQIQISTLLS…MMPTSYIRLS (225 aa)) form the Radical SAM core domain. [4Fe-4S] cluster-binding residues include C51, C55, and C58. Residues C95, C126, C186, and R258 each contribute to the [2Fe-2S] cluster site.

The protein belongs to the radical SAM superfamily. Biotin synthase family. In terms of assembly, homodimer. The cofactor is [4Fe-4S] cluster. Requires [2Fe-2S] cluster as cofactor.

The catalysed reaction is (4R,5S)-dethiobiotin + (sulfur carrier)-SH + 2 reduced [2Fe-2S]-[ferredoxin] + 2 S-adenosyl-L-methionine = (sulfur carrier)-H + biotin + 2 5'-deoxyadenosine + 2 L-methionine + 2 oxidized [2Fe-2S]-[ferredoxin]. Its pathway is cofactor biosynthesis; biotin biosynthesis; biotin from 7,8-diaminononanoate: step 2/2. Its function is as follows. Catalyzes the conversion of dethiobiotin (DTB) to biotin by the insertion of a sulfur atom into dethiobiotin via a radical-based mechanism. The protein is Biotin synthase of Buchnera aphidicola subsp. Baizongia pistaciae (strain Bp).